Consider the following 625-residue polypeptide: Putative xanthine/uracil permease C887.17 (625 aa).

A run of 10 helical transmembrane segments spans residues 49–69 (AGLTTFFAMAYILAVNATILV), 107–127 (AAISALASFCMGLFANMPVGM), 154–174 (EALLAVFVEGFIFTGLTVIGL), 192–212 (AGIGLYLTIIGLSPSAGLGVI), 246–263 (MWVGIFCGGVLTAILMMY), 328–348 (FAIALITFLYVDIMDMTGTLY), 369–389 (VAYIVDALSISIGSLFGCSPV), 406–426 (GILGMVVGICFFISLFFAPIF), 429–449 (IPVWATGSTLVLVGSMMMKST), and 465–485 (ITIALMPFTYSIAYGLIAGII). A disordered region spans residues 595 to 625 (EAVGESESFSNRQQDFRTPYAGIDMDTDDRI).

The protein belongs to the nucleobase:cation symporter-2 (NCS2) (TC 2.A.40) family. Azg-like subfamily.

Its subcellular location is the golgi apparatus membrane. The chain is Putative xanthine/uracil permease C887.17 from Schizosaccharomyces pombe (strain 972 / ATCC 24843) (Fission yeast).